Consider the following 158-residue polypeptide: Cyclic pyranopterin monophosphate synthase (158 aa).

Residues 75 to 77 (LCH) and 113 to 114 (ME) each bind substrate. D128 is an active-site residue.

This sequence belongs to the MoaC family. In terms of assembly, homohexamer; trimer of dimers.

The catalysed reaction is (8S)-3',8-cyclo-7,8-dihydroguanosine 5'-triphosphate = cyclic pyranopterin phosphate + diphosphate. It participates in cofactor biosynthesis; molybdopterin biosynthesis. Functionally, catalyzes the conversion of (8S)-3',8-cyclo-7,8-dihydroguanosine 5'-triphosphate to cyclic pyranopterin monophosphate (cPMP). The chain is Cyclic pyranopterin monophosphate synthase from Roseiflexus sp. (strain RS-1).